The following is a 499-amino-acid chain: MMSPPLRYQKDQQNQQHQQNQSQQAAHQMVSFMPQTPTSLPSTPIQLYPTGAAALIPAPPTYELIPNRIFVGGFPTSTTETELREHFEKFFAVKDVKMVKSLDGQSKGYGFITFETEDQAEEIRKLTPKQLEFRSRKLNLGPAIRKINSNSFQPSYAIATPSQLVAASPGPFSYAIPASPSPYSGYSYPASPQMFVYPPLRSQDQSRQQSEQQTTPQNSPTNLQHQQSPQVFFGGDQDPIRSYASAVAGVEKSEVSPEKHESVSPQPLLPNQNVLNTQYSQGQQQWNSNVQQQQQQQMDSNNGGPYYNENYSQGYTRPHPYQQFAQSGVYMNSQGMYHSSYSYMTPPLAPGQYPQMMSAPYWQQQQQHHQSHAYAGYNPAYNNWVGPSGDMNQFKQNPSNYFYQNYPGNFSQQHTMGNNENTFSLPLQAPRQGKKSRKPSECQDKKTKSPIKGARTERPSSSASTPDAKYQKNHRYPVHLSPLSASLQSLAISSPTKNN.

The segment at 1–29 (MMSPPLRYQKDQQNQQHQQNQSQQAAHQM) is disordered. Positions 12-28 (QQNQQHQQNQSQQAAHQ) are enriched in low complexity. The RRM domain occupies 66–144 (PNRIFVGGFP…SRKLNLGPAI (79 aa)). The span at 195–224 (FVYPPLRSQDQSRQQSEQQTTPQNSPTNLQ) shows a compositional bias: low complexity. 2 disordered regions span residues 195-304 (FVYP…NNGG) and 406-499 (YPGN…TKNN). One can recognise a DAZ domain in the interval 214–236 (TTPQNSPTNLQHQQSPQVFFGGD). The span at 251-262 (EKSEVSPEKHES) shows a compositional bias: basic and acidic residues. Residues 263–279 (VSPQPLLPNQNVLNTQY) are compositionally biased toward polar residues. Residues 280–304 (SQGQQQWNSNVQQQQQQQMDSNNGG) show a composition bias toward low complexity. A compositionally biased stretch (polar residues) spans 406–425 (YPGNFSQQHTMGNNENTFSL). The span at 438–447 (KPSECQDKKT) shows a compositional bias: basic and acidic residues. Over residues 480–499 (LSPLSASLQSLAISSPTKNN) the composition is skewed to low complexity.

It belongs to the RRM DAZ family. In terms of tissue distribution, germline specific. More strongly expressed during oogenesis than during spermatogenesis. During the larval stages, it is more abundant at the distal region than the proximal region of the gonad. In young adult hermaphrodites, it is expressed at a very low level in the distal mitotic region of the gonad, and begins to accumulate in the meiotic transition zone. Highly expressed in the proximal pachytene region. Not expressed in mature oocytes. Not expressed in the spermatheca. Weakly or not expressed in the germline of adult males.

In terms of biological role, RNA-binding protein that plays a central role in oogenesis, but not for spermatogenesis. Required for meiotic entry and germline differentiation, at the pachytene stage of meiosis I of female germline regardless of the sex of the soma. May act by regulating translation of specific mRNAs, possibly by binding to their 3'-UTR. In Caenorhabditis elegans, this protein is DAZ protein 1 (daz-1).